A 256-amino-acid chain; its full sequence is L-tyrosine degradation gene cluster protein hmgX (256 aa).

Belongs to the TTC36 family.

The protein resides in the cytoplasm. In terms of biological role, part of the L-tyrosine degradation gene cluster that mediates the biosynthesis of the brownish pigment pyomelanin as an alternative melanin. The 4-hydroxyphenylpyruvate dioxygenase hppD catalyzes the conversion of 4-hydroxyphenylpyruvate to homogentisic acid (HGA). The protein hmgX is crucial for this conversion and thus, probably functions as an accessory factor to mediate specific activity of hppD. The homogentisate 1,2-dioxygenase hmgA is then involved in the cleavage of the aromatic ring of HGA and its conversion to 4-maleylacetoacetate. When hmgA activity is lowered by the cell wall integrity (CWI) signaling pathway, HGA accumulates and leads to the production of pyomelanin through benzoquinone acetic acid after oxidation and polymerization. On the opposite, in non-stress conditions, both hppD and hmgA activities are balanced and HGA is degraded into 4-maleylacetoacetate. 4-maleylacetoacetate is further converted to 4-fumarylacetoacetate by the maleylacetoacetate isomerase maiA, which is degraded into fumarate and acetoacetate by the fumarylacetoacetase fahA. This Aspergillus fumigatus (strain ATCC MYA-4609 / CBS 101355 / FGSC A1100 / Af293) (Neosartorya fumigata) protein is L-tyrosine degradation gene cluster protein hmgX.